A 544-amino-acid chain; its full sequence is Chaperonin GroEL (544 aa).

Residues 30-33, Lys51, 87-91, Gly415, and Asp495 contribute to the ATP site; these read TLGP and DGTTT.

It belongs to the chaperonin (HSP60) family. As to quaternary structure, forms a cylinder of 14 subunits composed of two heptameric rings stacked back-to-back. Interacts with the co-chaperonin GroES.

It is found in the cytoplasm. It catalyses the reaction ATP + H2O + a folded polypeptide = ADP + phosphate + an unfolded polypeptide.. In terms of biological role, together with its co-chaperonin GroES, plays an essential role in assisting protein folding. The GroEL-GroES system forms a nano-cage that allows encapsulation of the non-native substrate proteins and provides a physical environment optimized to promote and accelerate protein folding. This is Chaperonin GroEL from Agrobacterium fabrum (strain C58 / ATCC 33970) (Agrobacterium tumefaciens (strain C58)).